The primary structure comprises 317 residues: Acetyl-coenzyme A carboxylase carboxyl transferase subunit alpha (317 aa).

The CoA carboxyltransferase C-terminal domain occupies 40 to 293 (LEVRVREAIV…GDVIANALGE (254 aa)).

The protein belongs to the AccA family. As to quaternary structure, acetyl-CoA carboxylase is a heterohexamer composed of biotin carboxyl carrier protein (AccB), biotin carboxylase (AccC) and two subunits each of ACCase subunit alpha (AccA) and ACCase subunit beta (AccD).

It is found in the cytoplasm. The enzyme catalyses N(6)-carboxybiotinyl-L-lysyl-[protein] + acetyl-CoA = N(6)-biotinyl-L-lysyl-[protein] + malonyl-CoA. The protein operates within lipid metabolism; malonyl-CoA biosynthesis; malonyl-CoA from acetyl-CoA: step 1/1. In terms of biological role, component of the acetyl coenzyme A carboxylase (ACC) complex. First, biotin carboxylase catalyzes the carboxylation of biotin on its carrier protein (BCCP) and then the CO(2) group is transferred by the carboxyltransferase to acetyl-CoA to form malonyl-CoA. The sequence is that of Acetyl-coenzyme A carboxylase carboxyl transferase subunit alpha from Rhizobium etli (strain ATCC 51251 / DSM 11541 / JCM 21823 / NBRC 15573 / CFN 42).